A 116-amino-acid chain; its full sequence is Small ribosomal subunit protein uS8c (116 aa).

Belongs to the universal ribosomal protein uS8 family. Part of the 30S ribosomal subunit.

It is found in the plastid. It localises to the chloroplast. Functionally, one of the primary rRNA binding proteins, it binds directly to 16S rRNA central domain where it helps coordinate assembly of the platform of the 30S subunit. This Musa acuminata (Banana) protein is Small ribosomal subunit protein uS8c (rps8).